Consider the following 191-residue polypeptide: Ribosomal RNA large subunit methyltransferase E (191 aa).

Residues Gly-49, Trp-51, Asp-66, Asp-82, and Asp-105 each contribute to the S-adenosyl-L-methionine site. Lys-145 functions as the Proton acceptor in the catalytic mechanism.

Belongs to the class I-like SAM-binding methyltransferase superfamily. RNA methyltransferase RlmE family.

The protein localises to the cytoplasm. The enzyme catalyses uridine(2552) in 23S rRNA + S-adenosyl-L-methionine = 2'-O-methyluridine(2552) in 23S rRNA + S-adenosyl-L-homocysteine + H(+). Its function is as follows. Specifically methylates the uridine in position 2552 of 23S rRNA at the 2'-O position of the ribose in the fully assembled 50S ribosomal subunit. This is Ribosomal RNA large subunit methyltransferase E from Archaeoglobus fulgidus (strain ATCC 49558 / DSM 4304 / JCM 9628 / NBRC 100126 / VC-16).